The primary structure comprises 474 residues: tRNA-2-methylthio-N(6)-dimethylallyladenosine synthase (474 aa).

The 118-residue stretch at 3–120 folds into the MTTase N-terminal domain; the sequence is KKLHIKTWGC…LPEMIDQIEA (118 aa). 6 residues coordinate [4Fe-4S] cluster: Cys12, Cys49, Cys83, Cys157, Cys161, and Cys164. The region spanning 143-375 is the Radical SAM core domain; it reads RADGPSAFVS…QDRITQQAMR (233 aa). The region spanning 378 to 441 is the TRAM domain; sequence RQMLGTVQRI…TNSLRGNFIR (64 aa).

The protein belongs to the methylthiotransferase family. MiaB subfamily. In terms of assembly, monomer. Requires [4Fe-4S] cluster as cofactor.

The protein localises to the cytoplasm. It catalyses the reaction N(6)-dimethylallyladenosine(37) in tRNA + (sulfur carrier)-SH + AH2 + 2 S-adenosyl-L-methionine = 2-methylsulfanyl-N(6)-dimethylallyladenosine(37) in tRNA + (sulfur carrier)-H + 5'-deoxyadenosine + L-methionine + A + S-adenosyl-L-homocysteine + 2 H(+). Catalyzes the methylthiolation of N6-(dimethylallyl)adenosine (i(6)A), leading to the formation of 2-methylthio-N6-(dimethylallyl)adenosine (ms(2)i(6)A) at position 37 in tRNAs that read codons beginning with uridine. The polypeptide is tRNA-2-methylthio-N(6)-dimethylallyladenosine synthase (Shewanella woodyi (strain ATCC 51908 / MS32)).